A 227-amino-acid polypeptide reads, in one-letter code: NADH-quinone oxidoreductase subunit C (227 aa).

Belongs to the complex I 30 kDa subunit family. As to quaternary structure, NDH-1 is composed of 14 different subunits. Subunits NuoB, C, D, E, F, and G constitute the peripheral sector of the complex.

It localises to the cell inner membrane. The enzyme catalyses a quinone + NADH + 5 H(+)(in) = a quinol + NAD(+) + 4 H(+)(out). Functionally, NDH-1 shuttles electrons from NADH, via FMN and iron-sulfur (Fe-S) centers, to quinones in the respiratory chain. The immediate electron acceptor for the enzyme in this species is believed to be ubiquinone. Couples the redox reaction to proton translocation (for every two electrons transferred, four hydrogen ions are translocated across the cytoplasmic membrane), and thus conserves the redox energy in a proton gradient. The protein is NADH-quinone oxidoreductase subunit C of Legionella pneumophila (strain Paris).